An 815-amino-acid polypeptide reads, in one-letter code: Protein-glutamine gamma-glutamyltransferase K (815 aa).

Residues 1-10 (MEGPRSDVGR) show a composition bias toward basic and acidic residues. 2 disordered regions span residues 1-48 (MEGP…SFWA) and 62-101 (DDWGPEPSGSRSRGTSSRGRDSRGGRRPESRGSGVNAAGD). The span at 16–25 (WQPPTTPSPE) shows a compositional bias: pro residues. Threonine 21 is subject to Phosphothreonine. 5 positions are modified to phosphoserine: serine 23, serine 71, serine 83, serine 91, and serine 94. Low complexity predominate over residues 66–78 (PEPSGSRSRGTSS). The segment covering 79-91 (RGRDSRGGRRPES) has biased composition (basic and acidic residues). Catalysis depends on residues cysteine 376, histidine 435, and aspartate 458. Positions 498, 500, 547, and 552 each coordinate Ca(2+). Residues 791 to 815 (GSGFSDAGGDSRSGENIPMAYRGGA) are disordered. Position 803 is a phosphoserine (serine 803).

It belongs to the transglutaminase superfamily. Transglutaminase family. In terms of assembly, interacts with PLAAT4. Ca(2+) is required as a cofactor. Post-translationally, tyrosine-phosphorylated. In terms of processing, palmitoylated. The membrane anchorage region possesses a cluster of five cysteines within which fatty acid(s) may become thioester-linked. It is subject to phorbol ester-stimulated phosphorylation and is hypersensitive to proteolysis, which releases the enzyme in a soluble form. Expressed in large amounts in epithelial tissues (lung, liver and kidney).

Its subcellular location is the membrane. The enzyme catalyses L-glutaminyl-[protein] + L-lysyl-[protein] = [protein]-L-lysyl-N(6)-5-L-glutamyl-[protein] + NH4(+). In terms of biological role, catalyzes the cross-linking of proteins and the conjugation of polyamines to proteins. Responsible for cross-linking epidermal proteins during formation of the stratum corneum. Involved in cell proliferation. This Mus musculus (Mouse) protein is Protein-glutamine gamma-glutamyltransferase K (Tgm1).